A 110-amino-acid chain; its full sequence is Small ribosomal subunit protein bS16 (110 aa).

The span at 81 to 104 (VRPAEVLGKQKQEKERSAKKKDAT) shows a compositional bias: basic and acidic residues. Residues 81 to 110 (VRPAEVLGKQKQEKERSAKKKDATASETSE) are disordered.

It belongs to the bacterial ribosomal protein bS16 family.

This Prochlorococcus marinus (strain NATL1A) protein is Small ribosomal subunit protein bS16.